Consider the following 417-residue polypeptide: Membrane protein UL43 (417 aa).

The tract at residues 1 to 21 (MLRNDSHRAVSPEDGQGRVDD) is disordered. 5 helical membrane passes run 57–77 (GPYA…LGFM), 90–110 (IYAW…SLGE), 119–139 (APGP…LLVL), 146–166 (LFLL…VGGL), and 175–195 (WWIG…GPGA). Residues 217 to 254 (AGESLSRRPPEDPERPGVPGPPSPPTPQRSHGPPADEV) are disordered. Residues 221–231 (LSRRPPEDPER) show a composition bias toward basic and acidic residues. A compositionally biased stretch (pro residues) spans 232-243 (PGVPGPPSPPTP). 5 consecutive transmembrane segments (helical) span residues 263–283 (ENVW…VKTV), 291–311 (PGPG…AVAL), 323–343 (LTDP…GLVF), 348–368 (VVVY…VLGL), and 389–409 (GLFF…CPPG).

The protein belongs to the alphaherpesvirinae HHV-1 UL43 family.

It is found in the membrane. This Human herpesvirus 1 (strain 17) (HHV-1) protein is Membrane protein UL43.